Consider the following 407-residue polypeptide: Probable succinyl-diaminopimelate desuccinylase (407 aa).

A Zn(2+)-binding site is contributed by His-72. Asp-74 is a catalytic residue. Asp-105 contributes to the Zn(2+) binding site. Residue Glu-139 is the Proton acceptor of the active site. The Zn(2+) site is built by Glu-140, Glu-165, and His-378.

Belongs to the peptidase M20A family. Zn(2+) serves as cofactor. Co(2+) is required as a cofactor.

It catalyses the reaction N-succinyl-(2S,6S)-2,6-diaminopimelate + H2O = (2S,6S)-2,6-diaminopimelate + succinate. It functions in the pathway amino-acid biosynthesis; L-lysine biosynthesis via DAP pathway; LL-2,6-diaminopimelate from (S)-tetrahydrodipicolinate (succinylase route): step 3/3. The protein is Probable succinyl-diaminopimelate desuccinylase (dapE) of Staphylococcus aureus (strain MRSA252).